The sequence spans 842 residues: Glycogen phosphorylase, muscle form (842 aa).

Position 2 is an N-acetylserine (serine 2). Serine 15 is subject to Phosphoserine; by PHK; in form phosphorylase A. At serine 26 the chain carries Phosphoserine. AMP contacts are provided by aspartate 43 and tyrosine 76. Residues tyrosine 204 and tyrosine 227 each carry the phosphotyrosine modification. 310–319 (RRFKSSKFGC) provides a ligand contact to AMP. Serine 430 carries the post-translational modification Phosphoserine. Tyrosine 473 is subject to Phosphotyrosine. Serine 514 is modified (phosphoserine). N6-(pyridoxal phosphate)lysine is present on lysine 681. Phosphoserine is present on residues serine 747 and serine 748.

This sequence belongs to the glycogen phosphorylase family. As to quaternary structure, homodimer. Homotetramer; to form the enzymatically active phosphorylase A. It depends on pyridoxal 5'-phosphate as a cofactor. In terms of processing, phosphorylation of Ser-15 converts phosphorylase B (unphosphorylated) to phosphorylase A.

It carries out the reaction [(1-&gt;4)-alpha-D-glucosyl](n) + phosphate = [(1-&gt;4)-alpha-D-glucosyl](n-1) + alpha-D-glucose 1-phosphate. Its activity is regulated as follows. Allosterically regulated through the non-covalent binding of metabolites, being activated by AMP and inhibited by ATP, ADP, and glucose-6-phosphate. The activity is also controlled by post-translational modifications including phosphorylation. Allosteric enzyme that catalyzes the rate-limiting step in glycogen catabolism, the phosphorolytic cleavage of glycogen to produce glucose-1-phosphate, and plays a central role in maintaining cellular and organismal glucose homeostasis. The protein is Glycogen phosphorylase, muscle form of Rattus norvegicus (Rat).